The sequence spans 88 residues: Small ribosomal subunit protein bS20 (88 aa).

The segment at 1 to 26 (MANTAQARKRARQNTKRRQNSASQRS) is disordered. The segment covering 7–19 (ARKRARQNTKRRQ) has biased composition (basic residues).

Belongs to the bacterial ribosomal protein bS20 family.

Functionally, binds directly to 16S ribosomal RNA. In Psychrobacter arcticus (strain DSM 17307 / VKM B-2377 / 273-4), this protein is Small ribosomal subunit protein bS20.